The chain runs to 59 residues: MLNIFSLICLNSALYPSSLFFAKLPEAYAFLNPIVDVMPVIPLFFFLLAFVWQAAVSFR.

Residues 1-22 constitute a propeptide that is removed on maturation; sequence MLNIFSLICLNSALYPSSLFFA. A helical membrane pass occupies residues 38 to 58; that stretch reads MPVIPLFFFLLAFVWQAAVSF.

The protein belongs to the PsbK family. PSII is composed of 1 copy each of membrane proteins PsbA, PsbB, PsbC, PsbD, PsbE, PsbF, PsbH, PsbI, PsbJ, PsbK, PsbL, PsbM, PsbT, PsbX, PsbY, PsbZ, Psb30/Ycf12, at least 3 peripheral proteins of the oxygen-evolving complex and a large number of cofactors. It forms dimeric complexes.

Its subcellular location is the plastid. It is found in the chloroplast thylakoid membrane. In terms of biological role, one of the components of the core complex of photosystem II (PSII). PSII is a light-driven water:plastoquinone oxidoreductase that uses light energy to abstract electrons from H(2)O, generating O(2) and a proton gradient subsequently used for ATP formation. It consists of a core antenna complex that captures photons, and an electron transfer chain that converts photonic excitation into a charge separation. The polypeptide is Photosystem II reaction center protein K (Lactuca sativa (Garden lettuce)).